A 281-amino-acid polypeptide reads, in one-letter code: 2-dehydro-3-deoxyphosphooctonate aldolase (281 aa).

Belongs to the KdsA family.

The protein resides in the cytoplasm. The catalysed reaction is D-arabinose 5-phosphate + phosphoenolpyruvate + H2O = 3-deoxy-alpha-D-manno-2-octulosonate-8-phosphate + phosphate. It participates in carbohydrate biosynthesis; 3-deoxy-D-manno-octulosonate biosynthesis; 3-deoxy-D-manno-octulosonate from D-ribulose 5-phosphate: step 2/3. Its pathway is bacterial outer membrane biogenesis; lipopolysaccharide biosynthesis. This Pseudomonas savastanoi pv. phaseolicola (strain 1448A / Race 6) (Pseudomonas syringae pv. phaseolicola (strain 1448A / Race 6)) protein is 2-dehydro-3-deoxyphosphooctonate aldolase.